The sequence spans 405 residues: Tryptophan synthase beta chain (405 aa).

Lys-98 is modified (N6-(pyridoxal phosphate)lysine).

This sequence belongs to the TrpB family. In terms of assembly, tetramer of two alpha and two beta chains. Pyridoxal 5'-phosphate serves as cofactor.

It catalyses the reaction (1S,2R)-1-C-(indol-3-yl)glycerol 3-phosphate + L-serine = D-glyceraldehyde 3-phosphate + L-tryptophan + H2O. Its pathway is amino-acid biosynthesis; L-tryptophan biosynthesis; L-tryptophan from chorismate: step 5/5. Its function is as follows. The beta subunit is responsible for the synthesis of L-tryptophan from indole and L-serine. The polypeptide is Tryptophan synthase beta chain (Xanthomonas axonopodis pv. citri (strain 306)).